We begin with the raw amino-acid sequence, 776 residues long: Ribosomal biogenesis protein LAS1L (776 aa).

Residues 185-227 (DEDQLDAEDPEEEEREIIADDVLEEIPEPQDDDKDEELAVEDD) are compositionally biased toward acidic residues. The disordered stretch occupies residues 185–247 (DEDQLDAEDP…SHPEPSSRHK (63 aa)). Over residues 228 to 247 (ANTKGNEEVASHPEPSSRHK) the composition is skewed to basic and acidic residues. A phosphoserine mark is found at Ser425 and Ser509. The tract at residues 501-646 (KAIEGSSSSS…DYDDDEEEDR (146 aa)) is disordered. The segment covering 544–557 (GNLKDVKQEEKKEN) has biased composition (basic and acidic residues). 2 stretches are compositionally biased toward acidic residues: residues 558–602 (EEEE…EEEE) and 611–646 (MEAD…EEDR). At Ser658 the chain carries Phosphoserine. An interaction with NOL9 region spans residues 677 to 696 (SAWQVSSEDVRWGTFPLGRL). A disordered region spans residues 733–759 (SSTLSLCCGGSNTNSSSSSSSGNMEGL). Residues 741–755 (GGSNTNSSSSSSSGN) are compositionally biased toward low complexity.

The protein belongs to the LAS1 family. In terms of assembly, component of some MLL1/MLL complex, at least composed of the core components KMT2A/MLL1, ASH2L, HCFC1/HCF1, WDR5 and RBBP5, as well as the facultative components BACC1, CHD8, E2F6, HSP70, INO80C, KANSL1, LAS1L, MAX, MCRS1, MGA, MYST1/MOF, PELP1, PHF20, PRP31, RING2, RUVB1/TIP49A, RUVB2/TIP49B, SENP3, TAF1, TAF4, TAF6, TAF7, TAF9 and TEX10. Component of the 5FMC complex, at least composed of PELP1, LAS1L, TEX10, WDR18 and SENP3; the complex interacts with methylated CHTOP and ZNF148. Interacts with NOL9 to form an ITS2 pre-rRNA endonuclease-kinase complex.

Its subcellular location is the nucleus. It is found in the nucleolus. The protein resides in the nucleoplasm. It localises to the cytoplasm. Required for the synthesis of the 60S ribosomal subunit and maturation of the 28S rRNA. Functions as a component of the Five Friends of Methylated CHTOP (5FMC) complex; the 5FMC complex is recruited to ZNF148 by methylated CHTOP, leading to desumoylation of ZNF148 and subsequent transactivation of ZNF148 target genes. Required for the efficient pre-rRNA processing at both ends of internal transcribed spacer 2 (ITS2). This is Ribosomal biogenesis protein LAS1L (Las1l) from Mus musculus (Mouse).